The chain runs to 270 residues: tRNA pseudouridine synthase A (270 aa).

The active-site Nucleophile is Asp-60. Residues 107–111 (FHARF) form an RNA binding region. Position 118 (Tyr-118) interacts with substrate. The tract at residues 168 to 172 (QCQSR) is interaction with tRNA.

Belongs to the tRNA pseudouridine synthase TruA family. As to quaternary structure, homodimer.

It catalyses the reaction uridine(38/39/40) in tRNA = pseudouridine(38/39/40) in tRNA. Functionally, formation of pseudouridine at positions 38, 39 and 40 in the anticodon stem and loop of transfer RNAs. In Escherichia fergusonii (strain ATCC 35469 / DSM 13698 / CCUG 18766 / IAM 14443 / JCM 21226 / LMG 7866 / NBRC 102419 / NCTC 12128 / CDC 0568-73), this protein is tRNA pseudouridine synthase A.